The chain runs to 308 residues: MAHMKTRLVYASILMMGALCLYFSMDSFRELPFVFKKSHGKFLQIPDIDCKQKPPFLVLLVTSSHKQLAARMAIRKTWGRETSVQGQQVRTFFLLGTSDSTEEMDATTLESEQHRDIIQKDFKDAYFNLTLKTMMGMEWVYHFCPQTAYVMKTDSDMFVNVGYLTELLLKKNKTTRFFTGYIKPHDFPIRQKFNKWFVSKFEYPWDRYPPFCSGTGYVFSSDVAIQVYNVSESVPFIKLEDVFVGLCLAKLKIRPEELHTKQTFFPGGLRFSVCRFQKIVACHFMKPQDLLTYWQALENSKEQDCPAV.

Residues 1–7 lie on the Cytoplasmic side of the membrane; that stretch reads MAHMKTR. The helical; Signal-anchor for type II membrane protein transmembrane segment at 8-25 threads the bilayer; it reads LVYASILMMGALCLYFSM. Residues 26 to 308 lie on the Lumenal side of the membrane; sequence DSFRELPFVF…NSKEQDCPAV (283 aa). Residues asparagine 128, asparagine 172, and asparagine 229 are each glycosylated (N-linked (GlcNAc...) asparagine).

The protein belongs to the glycosyltransferase 31 family. As to expression, expressed in brain and kidney.

Its subcellular location is the golgi apparatus membrane. It catalyses the reaction a globoside Gb4Cer (d18:1(4E)) + UDP-alpha-D-galactose = a globoside GalGb4Cer (d18:1(4E)) + UDP + H(+). Its pathway is protein modification; protein glycosylation. In terms of biological role, catalyzes the transfer of Gal to GlcNAc-based acceptors with a preference for the core3 O-linked glycan GlcNAc(beta1,3)GalNAc structure. Can use glycolipid LC3Cer as an efficient acceptor. Also catalyzes the transfer of Gal to the terminal GalNAc unit of the globoside GB4, thereby synthesizing the glycolipid GB5, also known as the stage-specific embryonic antigen-3 (SSEA-3). This chain is Beta-1,3-galactosyltransferase 5, found in Mus musculus (Mouse).